The chain runs to 105 residues: Nucleoid-associated protein TTHA1599 (105 aa).

Belongs to the YbaB/EbfC family. In terms of assembly, homodimer.

Its subcellular location is the cytoplasm. It localises to the nucleoid. Its function is as follows. Binds to DNA and alters its conformation. May be involved in regulation of gene expression, nucleoid organization and DNA protection. This is Nucleoid-associated protein TTHA1599 from Thermus thermophilus (strain ATCC 27634 / DSM 579 / HB8).